The chain runs to 289 residues: Ribosomal protein L11 methyltransferase (289 aa).

S-adenosyl-L-methionine contacts are provided by threonine 135, glycine 156, aspartate 179, and asparagine 225.

The protein belongs to the methyltransferase superfamily. PrmA family.

It is found in the cytoplasm. The enzyme catalyses L-lysyl-[protein] + 3 S-adenosyl-L-methionine = N(6),N(6),N(6)-trimethyl-L-lysyl-[protein] + 3 S-adenosyl-L-homocysteine + 3 H(+). In terms of biological role, methylates ribosomal protein L11. The sequence is that of Ribosomal protein L11 methyltransferase from Chlorobaculum tepidum (strain ATCC 49652 / DSM 12025 / NBRC 103806 / TLS) (Chlorobium tepidum).